Reading from the N-terminus, the 172-residue chain is Large ribosomal subunit protein uL16 (172 aa).

The protein belongs to the universal ribosomal protein uL16 family.

The sequence is that of Large ribosomal subunit protein uL16 from Methanocella arvoryzae (strain DSM 22066 / NBRC 105507 / MRE50).